Here is a 676-residue protein sequence, read N- to C-terminus: DNA ligase (676 aa).

NAD(+)-binding positions include 32–36 (DAEYD), 81–82 (SL), and glutamate 113. Lysine 115 serves as the catalytic N6-AMP-lysine intermediate. Residues arginine 136, glutamate 173, lysine 291, and lysine 315 each coordinate NAD(+). Cysteine 409, cysteine 412, cysteine 427, and cysteine 433 together coordinate Zn(2+). The region spanning 595–676 (SEKTYFFNKK…LNSLIRIKEQ (82 aa)) is the BRCT domain.

Belongs to the NAD-dependent DNA ligase family. LigA subfamily. Requires Mg(2+) as cofactor. It depends on Mn(2+) as a cofactor.

The catalysed reaction is NAD(+) + (deoxyribonucleotide)n-3'-hydroxyl + 5'-phospho-(deoxyribonucleotide)m = (deoxyribonucleotide)n+m + AMP + beta-nicotinamide D-nucleotide.. In terms of biological role, DNA ligase that catalyzes the formation of phosphodiester linkages between 5'-phosphoryl and 3'-hydroxyl groups in double-stranded DNA using NAD as a coenzyme and as the energy source for the reaction. It is essential for DNA replication and repair of damaged DNA. The chain is DNA ligase from Buchnera aphidicola subsp. Acyrthosiphon pisum (strain Tuc7).